Consider the following 4960-residue polypeptide: Malformin synthetase mlfA (4960 aa).

An adenylation 1 region spans residues 194-564 (ERHATNRPHS…CGRADTQVKL (371 aa)). The Carrier 1 domain occupies 705 to 778 (SRLEQEVQLA…EAASLAEVQE (74 aa)). O-(pantetheine 4'-phosphoryl)serine is present on S739. Residues 816–1247 (EDVFPCTTMQ…ALNTLSLLQA (432 aa)) form a condensation 1 region. Residues 1275-1650 (DRWVTRQPEG…GRKDTQVKLR (376 aa)) form an adenylation 2 region. One can recognise a Carrier 2 domain in the interval 1777–1854 (TPASELERTL…HLAAEVGEPA (78 aa)). 2 disordered regions span residues 1855 to 1883 (GQSA…NDGV) and 1917 to 1943 (GGSS…KKNA). 2 stretches are compositionally biased toward low complexity: residues 1857 to 1881 (SASS…STND) and 1919 to 1936 (SSSN…SSSS). The condensation 2 stretch occupies residues 1989 to 2404 (EDIYPATALQ…AVSCSDKETL (416 aa)). Positions 2427-2819 (RRTPHAPAVC…IGRRDGQLKL (393 aa)) are adenylation 3. In terms of domain architecture, Carrier 3 spans 2955–3031 (RPVTSQEREM…QLICHINTIR (77 aa)). The residue at position 2992 (S2992) is an O-(pantetheine 4'-phosphoryl)serine. Condensation regions lie at residues 3049-3464 (VALA…FTFP) and 3520-3889 (SGYV…EQLV). Residues 3914–4304 (HNSRQAVCAW…VGRKDNQIKF (391 aa)) form an adenylation 4 region. Residues 4438 to 4514 (MPSTAAERKM…DLSDQAKSLI (77 aa)) enclose the Carrier 4 domain. The residue at position 4475 (S4475) is an O-(pantetheine 4'-phosphoryl)serine. Residues 4551–4878 (DVLPTTSFQH…LQTIVQHQNN (328 aa)) are condensation 5.

The protein belongs to the NRP synthetase family.

It participates in secondary metabolite biosynthesis. Nonribosomal peptide synthetase; part of the gene cluster that mediates the biosynthesis of malformins, cyclic pentapeptides with a disulfide bond between 2 consecutive cysteins, that show potential anti-tumor as well as antimalarial and antitrypanosomal properties. The nonribosomal peptide synthetase mlfA is responsible of the formation of the cyclic pentapeptide. The malformin biosynthesis clusters in malformin-producing fungi also contain enzymes involved in the formation of the disulfide bond between the two consecutive cysteins within malformins, in addition to additional tailoring enzymes such as methyltransferases or oxidoreductases. They are also composed of up to 4 major facilitator superfamily transporters, and transcription factors probably involved in the regulation of the expression of those clusters. This chain is Malformin synthetase mlfA, found in Aspergillus neoniger (strain CBS 115656).